A 228-amino-acid polypeptide reads, in one-letter code: Phosphoglycolate phosphatase (228 aa).

The active-site Nucleophile is the aspartate 12. Residues aspartate 12, aspartate 14, and aspartate 177 each coordinate Mg(2+).

This sequence belongs to the HAD-like hydrolase superfamily. CbbY/CbbZ/Gph/YieH family. Mg(2+) is required as a cofactor.

It carries out the reaction 2-phosphoglycolate + H2O = glycolate + phosphate. It participates in organic acid metabolism; glycolate biosynthesis; glycolate from 2-phosphoglycolate: step 1/1. Its function is as follows. Specifically catalyzes the dephosphorylation of 2-phosphoglycolate. Is involved in the dissimilation of the intracellular 2-phosphoglycolate formed during the DNA repair of 3'-phosphoglycolate ends, a major class of DNA lesions induced by oxidative stress. The sequence is that of Phosphoglycolate phosphatase from Vibrio vulnificus (strain YJ016).